The chain runs to 391 residues: Oxytocin receptor (391 aa).

The Extracellular portion of the chain corresponds to 1 to 38 (MEGAFAANWSAEAVNGSAAPPGTEGNRTAGPPQRNEAL). N-linked (GlcNAc...) asparagine glycosylation is found at Asn-8, Asn-15, and Asn-26. Residues 39-63 (ARVEVAVLSLILFLALSGNACVLLA) form a helical membrane-spanning segment. At 64–74 (LRTTRHKHSRL) the chain is on the cytoplasmic side. The chain crosses the membrane as a helical span at residues 75–97 (FFFMKHLSIADLAVAVFQVLPQL). Topologically, residues 98 to 113 (LWDITFRFYGPDLLCR) are extracellular. Cysteines 112 and 187 form a disulfide. A helical membrane pass occupies residues 114–135 (LVKYLQVVGMFASTYLLLLMSL). Residues 136–154 (DRCLAICQPLRSLRRRTDR) lie on the Cytoplasmic side of the membrane. A helical transmembrane segment spans residues 155–175 (LAVLATWLGCLVASAPQVHIF). At 176-202 (SLREVADGVFDCWAVFIQPWGPKAYIT) the chain is on the extracellular side. The helical transmembrane segment at 203-225 (WITLAVYIVPVIVLAACYGLISF) threads the bilayer. Residues 226–277 (KIWQNLRLKTEAAAAEASAGAEGAAADCAGRAALARVSNVKLISKAKIRTVK) are Cytoplasmic-facing. The chain crosses the membrane as a helical span at residues 278-296 (MTFIVVLAFIVCWTPFFFK). Topologically, residues 297–311 (QMWSVWDADAPKEAS) are extracellular. Residues 312-334 (AFIIAMLLASLNSCCNPWIYMLF) traverse the membrane as a helical segment. Residues 335-391 (TGHLFQDLVQRFLCCSFRRLKGSQLGETSVTKKIHSYTFVLSRHSSSQRSCSQPSTV) lie on the Cytoplasmic side of the membrane. Phosphoserine is present on Ser-370.

The protein belongs to the G-protein coupled receptor 1 family. Vasopressin/oxytocin receptor subfamily.

It localises to the cell membrane. Receptor for oxytocin. The activity of this receptor is mediated by G proteins which activate a phosphatidylinositol-calcium second messenger system. The chain is Oxytocin receptor (OXTR) from Ovis aries (Sheep).